The primary structure comprises 223 residues: Deoxyribose-phosphate aldolase (223 aa).

The Proton donor/acceptor role is filled by Asp89. The active-site Schiff-base intermediate with acetaldehyde is Lys152. Lys181 serves as the catalytic Proton donor/acceptor.

It belongs to the DeoC/FbaB aldolase family. DeoC type 1 subfamily.

It localises to the cytoplasm. The enzyme catalyses 2-deoxy-D-ribose 5-phosphate = D-glyceraldehyde 3-phosphate + acetaldehyde. It functions in the pathway carbohydrate degradation; 2-deoxy-D-ribose 1-phosphate degradation; D-glyceraldehyde 3-phosphate and acetaldehyde from 2-deoxy-alpha-D-ribose 1-phosphate: step 2/2. Catalyzes a reversible aldol reaction between acetaldehyde and D-glyceraldehyde 3-phosphate to generate 2-deoxy-D-ribose 5-phosphate. The polypeptide is Deoxyribose-phosphate aldolase (Listeria innocua serovar 6a (strain ATCC BAA-680 / CLIP 11262)).